We begin with the raw amino-acid sequence, 350 residues long: Protein RecA (350 aa).

68–75 (GPESSGKT) contributes to the ATP binding site.

It belongs to the RecA family.

It is found in the cytoplasm. In terms of biological role, can catalyze the hydrolysis of ATP in the presence of single-stranded DNA, the ATP-dependent uptake of single-stranded DNA by duplex DNA, and the ATP-dependent hybridization of homologous single-stranded DNAs. It interacts with LexA causing its activation and leading to its autocatalytic cleavage. The protein is Protein RecA of Mycolicibacterium vanbaalenii (strain DSM 7251 / JCM 13017 / BCRC 16820 / KCTC 9966 / NRRL B-24157 / PYR-1) (Mycobacterium vanbaalenii).